The following is a 319-amino-acid chain: MQLVQLLPPGVSLLALVWLAVDAAFLTALLLYLQRGCDSGRSLLCSVFQDLIRYGKTKSGLRRPSWLQWFDIPKRCFWHFYFVSLVWNGFLLWILLHLLLQSVPVPEWLQAVLQFLCAGSEPQVLGGELSVVLAFSLLWLHSLRRLLECLFVSIFSNGVIHFVQYCFGLGYYILIGFTILGYCPLDRRTAVSLDDLLMQGNWYHILGLTLYVWASLHQYTCHCILADLRKSASGAIINLKHAVPTGDWFEKVSCPHYFAELLIYLSIAVVFGLLNTIWWLVVLYVLLSQALAAVLCHEFYHEKFDSYPIHRKAFIPLIF.

At 1–12 the chain is on the cytoplasmic side; sequence MQLVQLLPPGVS. A helical transmembrane segment spans residues 13–33; sequence LLALVWLAVDAAFLTALLLYL. Residues 34 to 79 are Lumenal-facing; it reads QRGCDSGRSLLCSVFQDLIRYGKTKSGLRRPSWLQWFDIPKRCFWH. The chain crosses the membrane as a helical span at residues 80-100; it reads FYFVSLVWNGFLLWILLHLLL. Topologically, residues 101–122 are cytoplasmic; that stretch reads QSVPVPEWLQAVLQFLCAGSEP. The chain crosses the membrane as a helical span at residues 123–143; sequence QVLGGELSVVLAFSLLWLHSL. At 144–158 the chain is on the lumenal side; sequence RRLLECLFVSIFSNG. A helical membrane pass occupies residues 159 to 179; sequence VIHFVQYCFGLGYYILIGFTI. Residues 180–195 are Cytoplasmic-facing; sequence LGYCPLDRRTAVSLDD. The helical transmembrane segment at 196-216 threads the bilayer; it reads LLMQGNWYHILGLTLYVWASL. Topologically, residues 217-266 are lumenal; sequence HQYTCHCILADLRKSASGAIINLKHAVPTGDWFEKVSCPHYFAELLIYLS. The chain crosses the membrane as a helical span at residues 267–287; sequence IAVVFGLLNTIWWLVVLYVLL. The Cytoplasmic segment spans residues 288–319; that stretch reads SQALAAVLCHEFYHEKFDSYPIHRKAFIPLIF.

Belongs to the steroid 5-alpha reductase family. Polyprenal reductase subfamily.

The protein resides in the endoplasmic reticulum membrane. The catalysed reaction is a di-trans,poly-cis-dolichal + NADP(+) = a di-trans,poly-cis-polyprenal + NADPH + H(+). It catalyses the reaction a 3-oxo-5alpha-steroid + NADP(+) = a 3-oxo-Delta(4)-steroid + NADPH + H(+). It carries out the reaction androst-4-ene-3,17-dione + NADPH + H(+) = 5alpha-androstan-3,17-dione + NADP(+). The enzyme catalyses 17beta-hydroxy-5alpha-androstan-3-one + NADP(+) = testosterone + NADPH + H(+). The protein operates within protein modification; protein glycosylation. Its function is as follows. Plays a key role in early steps of protein N-linked glycosylation by being involved in the conversion of polyprenol into dolichol. Acts as a polyprenal reductase that mediates the reduction of polyprenal into dolichal in a NADP-dependent mechanism. Dolichols are required for the synthesis of dolichol-linked monosaccharides and the oligosaccharide precursor used for N-glycosylation. Also able to convert testosterone (T) into 5-alpha-dihydrotestosterone (DHT). This is Polyprenal reductase (srd5a3) from Xenopus laevis (African clawed frog).